A 1033-amino-acid polypeptide reads, in one-letter code: Probable LRR receptor-like serine/threonine-protein kinase At1g56140 (1033 aa).

Residues 1–28 (MLRLWRYLCLLLTVWFLCNFGPVYVVRA) form the signal peptide. At 29–636 (QNRTGATTHP…PSKGKSMTGT (608 aa)) the chain is on the extracellular side. Asparagine 30, asparagine 60, and asparagine 94 each carry an N-linked (GlcNAc...) asparagine glycan. LRR repeat units lie at residues 97–121 (ICRI…LWTL), 122–145 (EYLT…LGNL), 147–169 (RMRW…IGLL), 170–193 (TDLR…IGRC), 195–217 (KLQQ…FANL), 241–264 (WTKL…SFSN), 265–288 (LTSL…FIKD), 289–313 (MKSL…IGEY), 314–337 (SSLR…LFNL), 339–361 (QLTH…KGQS), 363–382 (SNVD…WVSL), 383–406 (PNLN…VLSG), and 422–445 (IYSD…VFER). Residue asparagine 144 is glycosylated (N-linked (GlcNAc...) asparagine). Residue asparagine 181 is glycosylated (N-linked (GlcNAc...) asparagine). N-linked (GlcNAc...) asparagine glycans are attached at residues asparagine 264, asparagine 280, and asparagine 301. 2 N-linked (GlcNAc...) asparagine glycosylation sites follow: asparagine 347 and asparagine 351. N-linked (GlcNAc...) asparagine glycosylation is present at asparagine 393. N-linked (GlcNAc...) asparagine glycosylation is present at asparagine 579. The helical transmembrane segment at 637-657 (IVGVIVGVGLLSIISGVVIFI) threads the bilayer. The Cytoplasmic portion of the chain corresponds to 658 to 1033 (IRKRRKRYTD…MLGAQMNEGR (376 aa)). Residue threonine 682 is modified to Phosphothreonine. The Protein kinase domain occupies 693 to 951 (FDPSNKLGEG…LCTQTSHALR (259 aa)). Residues 699–707 (LGEGGFGPV) and lysine 721 each bind ATP. Residue tyrosine 766 is modified to Phosphotyrosine. The active-site Proton acceptor is aspartate 817. 2 positions are modified to phosphoserine: serine 821 and serine 850. A phosphothreonine mark is found at threonine 851 and threonine 856. Residue tyrosine 864 is modified to Phosphotyrosine. A disordered region spans residues 1012–1033 (SEISPRNNDARPMLGAQMNEGR).

This sequence belongs to the protein kinase superfamily. Ser/Thr protein kinase family.

It localises to the membrane. It carries out the reaction L-seryl-[protein] + ATP = O-phospho-L-seryl-[protein] + ADP + H(+). The enzyme catalyses L-threonyl-[protein] + ATP = O-phospho-L-threonyl-[protein] + ADP + H(+). In Arabidopsis thaliana (Mouse-ear cress), this protein is Probable LRR receptor-like serine/threonine-protein kinase At1g56140.